Reading from the N-terminus, the 175-residue chain is Nucleoside triphosphate/diphosphate phosphatase (175 aa).

The active-site Proton donor is R23. Mg(2+) contacts are provided by N87, D103, D105, D107, D120, and E123.

This sequence belongs to the Ntdp family. Mg(2+) is required as a cofactor.

It catalyses the reaction a ribonucleoside 5'-triphosphate + H2O = a ribonucleoside 5'-diphosphate + phosphate + H(+). It carries out the reaction a ribonucleoside 5'-diphosphate + H2O = a ribonucleoside 5'-phosphate + phosphate + H(+). Its function is as follows. Has nucleoside phosphatase activity towards nucleoside triphosphates and nucleoside diphosphates. The protein is Nucleoside triphosphate/diphosphate phosphatase of Halalkalibacterium halodurans (strain ATCC BAA-125 / DSM 18197 / FERM 7344 / JCM 9153 / C-125) (Bacillus halodurans).